A 620-amino-acid chain; its full sequence is Chaperone protein HscA homolog (620 aa).

The protein belongs to the heat shock protein 70 family.

Chaperone involved in the maturation of iron-sulfur cluster-containing proteins. Has a low intrinsic ATPase activity which is markedly stimulated by HscB. In Pseudomonas fluorescens (strain SBW25), this protein is Chaperone protein HscA homolog.